The chain runs to 309 residues: Transcription elongation factor S-II (309 aa).

Residues 5–79 (EVLVHVKNLE…SSWKDAINKN (75 aa)) enclose the TFIIS N-terminal domain. Positions 78–142 (KNKRSRQAQQ…NSKNDGVDTA (65 aa)) are disordered. Residues 88–102 (HHQDHAPGNAEDKTT) are compositionally biased toward basic and acidic residues. Polar residues predominate over residues 103–120 (VGESVNGVQQPASSQSDA). At Ser116 the chain carries Phosphoserine. A TFIIS central domain is found at 148–264 (LRDQVLKALY…NAQGATIERS (117 aa)). Residues 267–307 (DRFTCGKCKEKKVSYYQLQTRSADEPLTTFCTCEACGNRWK) form a TFIIS-type zinc finger. The Zn(2+) site is built by Cys271, Cys274, Cys299, and Cys302.

This sequence belongs to the TFS-II family.

The protein resides in the nucleus. Necessary for efficient RNA polymerase II transcription elongation past template-encoded arresting sites. The arresting sites in DNA have the property of trapping a certain fraction of elongating RNA polymerases that pass through, resulting in locked ternary complexes. Cleavage of the nascent transcript by S-II allows the resumption of elongation from the new 3'-terminus. In terms of biological role, can promote the transfer of one strand of a double-stranded DNA molecule to a homologous single strand and thus may be involved in recombination. The polypeptide is Transcription elongation factor S-II (DST1) (Saccharomyces cerevisiae (strain ATCC 204508 / S288c) (Baker's yeast)).